The primary structure comprises 274 residues: Large ribosomal subunit protein uL2cz/uL2cy (274 aa).

2 disordered regions span residues 1–23 (MAIHLYKTSTPSTRNGAVDSKVK) and 224–274 (NPVD…RRSK).

Belongs to the universal ribosomal protein uL2 family. In terms of assembly, part of the 50S ribosomal subunit.

The protein localises to the plastid. It is found in the chloroplast. The protein is Large ribosomal subunit protein uL2cz/uL2cy (rpl2-A) of Lactuca sativa (Garden lettuce).